A 161-amino-acid polypeptide reads, in one-letter code: Nucleotide-binding protein XAC3671 (161 aa).

Belongs to the YajQ family.

Functionally, nucleotide-binding protein. This Xanthomonas axonopodis pv. citri (strain 306) protein is Nucleotide-binding protein XAC3671.